We begin with the raw amino-acid sequence, 342 residues long: S-adenosylmethionine:tRNA ribosyltransferase-isomerase (342 aa).

It belongs to the QueA family. Monomer.

The protein resides in the cytoplasm. The catalysed reaction is 7-aminomethyl-7-carbaguanosine(34) in tRNA + S-adenosyl-L-methionine = epoxyqueuosine(34) in tRNA + adenine + L-methionine + 2 H(+). The protein operates within tRNA modification; tRNA-queuosine biosynthesis. Functionally, transfers and isomerizes the ribose moiety from AdoMet to the 7-aminomethyl group of 7-deazaguanine (preQ1-tRNA) to give epoxyqueuosine (oQ-tRNA). The chain is S-adenosylmethionine:tRNA ribosyltransferase-isomerase from Streptococcus pyogenes serotype M2 (strain MGAS10270).